The following is a 338-amino-acid chain: Methionine import ATP-binding protein MetN (338 aa).

Residues 2–241 (ISLDGIRKVF…PKEHITKEFV (240 aa)) form the ABC transporter domain. Residue 38 to 45 (GYSGAGKS) coordinates ATP.

The protein belongs to the ABC transporter superfamily. Methionine importer (TC 3.A.1.24) family. In terms of assembly, the complex is composed of two ATP-binding proteins (MetN), two transmembrane proteins (MetI) and a solute-binding protein (MetQ).

The protein localises to the cell membrane. The catalysed reaction is L-methionine(out) + ATP + H2O = L-methionine(in) + ADP + phosphate + H(+). It carries out the reaction D-methionine(out) + ATP + H2O = D-methionine(in) + ADP + phosphate + H(+). Part of the ABC transporter complex MetNIQ involved in methionine import. Responsible for energy coupling to the transport system. This chain is Methionine import ATP-binding protein MetN, found in Halalkalibacterium halodurans (strain ATCC BAA-125 / DSM 18197 / FERM 7344 / JCM 9153 / C-125) (Bacillus halodurans).